Here is a 114-residue protein sequence, read N- to C-terminus: Pro-FMRFamide-related neuropeptide FF (114 aa).

The N-terminal stretch at Met-1–Ala-21 is a signal peptide. Positions Glu-22 to Pro-69 are excised as a propeptide. A disordered region spans residues Glu-29–Arg-51. Phe-82 bears the Phenylalanine amide mark. Residues Asn-85–Arg-100 constitute a propeptide that is removed on maturation. Phenylalanine amide is present on Phe-111.

The protein belongs to the FARP (FMRFamide related peptide) family.

It localises to the secreted. Its function is as follows. Morphine modulating peptides. Have wide-ranging physiologic effects, including the modulation of morphine-induced analgesia, elevation of arterial blood pressure, and increased somatostatin secretion from the pancreas. Neuropeptide FF and SF potentiate and sensitize ASIC2 and ASIC3 channels. In Rattus norvegicus (Rat), this protein is Pro-FMRFamide-related neuropeptide FF (Npff).